The chain runs to 151 residues: Linear element protein Mug20 (151 aa).

The stretch at Glu56–Glu140 forms a coiled coil.

Component of linear elements (LinEs), which are similar to synaptonemal complexes, at least composed of rec27, rec25, rec10 and mug20. Interacts with rec10.

The protein resides in the cytoplasm. It is found in the nucleus. It localises to the chromosome. Its function is as follows. During meiotic DNA recombination, binds to and may help activate DNA double-strand break (DSB) hotspot sites. The chain is Linear element protein Mug20 from Schizosaccharomyces pombe (strain 972 / ATCC 24843) (Fission yeast).